Consider the following 416-residue polypeptide: Serine hydroxymethyltransferase (416 aa).

(6S)-5,6,7,8-tetrahydrofolate contacts are provided by residues Leu121 and Gly125 to Leu127. Lys229 carries the post-translational modification N6-(pyridoxal phosphate)lysine.

Belongs to the SHMT family. As to quaternary structure, homodimer. Pyridoxal 5'-phosphate serves as cofactor.

It is found in the cytoplasm. It catalyses the reaction (6R)-5,10-methylene-5,6,7,8-tetrahydrofolate + glycine + H2O = (6S)-5,6,7,8-tetrahydrofolate + L-serine. The protein operates within one-carbon metabolism; tetrahydrofolate interconversion. It participates in amino-acid biosynthesis; glycine biosynthesis; glycine from L-serine: step 1/1. Catalyzes the reversible interconversion of serine and glycine with tetrahydrofolate (THF) serving as the one-carbon carrier. This reaction serves as the major source of one-carbon groups required for the biosynthesis of purines, thymidylate, methionine, and other important biomolecules. Also exhibits THF-independent aldolase activity toward beta-hydroxyamino acids, producing glycine and aldehydes, via a retro-aldol mechanism. In Dechloromonas aromatica (strain RCB), this protein is Serine hydroxymethyltransferase.